The chain runs to 488 residues: Bifunctional protein HldE (488 aa).

The ribokinase stretch occupies residues 1-330; the sequence is MDRKSIESIF…NAVALAHSDS (330 aa). 205-208 contributes to the ATP binding site; sequence NRRE. Asp275 is an active-site residue. The cytidylyltransferase stretch occupies residues 356-488; that stretch reads FTNGCFDLLH…IIERVLERYS (133 aa).

It in the N-terminal section; belongs to the carbohydrate kinase PfkB family. This sequence in the C-terminal section; belongs to the cytidylyltransferase family. In terms of assembly, homodimer.

The enzyme catalyses D-glycero-beta-D-manno-heptose 7-phosphate + ATP = D-glycero-beta-D-manno-heptose 1,7-bisphosphate + ADP + H(+). The catalysed reaction is D-glycero-beta-D-manno-heptose 1-phosphate + ATP + H(+) = ADP-D-glycero-beta-D-manno-heptose + diphosphate. It functions in the pathway nucleotide-sugar biosynthesis; ADP-L-glycero-beta-D-manno-heptose biosynthesis; ADP-L-glycero-beta-D-manno-heptose from D-glycero-beta-D-manno-heptose 7-phosphate: step 1/4. Its pathway is nucleotide-sugar biosynthesis; ADP-L-glycero-beta-D-manno-heptose biosynthesis; ADP-L-glycero-beta-D-manno-heptose from D-glycero-beta-D-manno-heptose 7-phosphate: step 3/4. Its function is as follows. Catalyzes the phosphorylation of D-glycero-D-manno-heptose 7-phosphate at the C-1 position to selectively form D-glycero-beta-D-manno-heptose-1,7-bisphosphate. Catalyzes the ADP transfer from ATP to D-glycero-beta-D-manno-heptose 1-phosphate, yielding ADP-D-glycero-beta-D-manno-heptose. This Pelobacter propionicus (strain DSM 2379 / NBRC 103807 / OttBd1) protein is Bifunctional protein HldE.